Consider the following 98-residue polypeptide: Small ribosomal subunit protein uS19 (98 aa).

Disordered regions lie at residues 1 to 30 and 78 to 98; these read MARS…KKSV and RTFH…PAKK. Over residues 9-24 the composition is skewed to basic and acidic residues; that stretch reads PFADKHLTKKVEDANK.

It belongs to the universal ribosomal protein uS19 family.

Its function is as follows. Protein S19 forms a complex with S13 that binds strongly to the 16S ribosomal RNA. This chain is Small ribosomal subunit protein uS19, found in Anaeromyxobacter dehalogenans (strain 2CP-1 / ATCC BAA-258).